Reading from the N-terminus, the 317-residue chain is 8-oxo-(d)GTP phosphatase (317 aa).

The Nudix hydrolase domain occupies 15 to 148 (RIVYAAGAVL…DRKVLCRFAK (134 aa)). Substrate-binding positions include 43–46 (RPRY), Asp-48, and 53–55 (KGK). Mg(2+)-binding residues include Lys-53, Glu-69, and Glu-73. Positions 54–75 (GKVDPGETAPVGAVREILEETG) match the Nudix box motif. Positions 89, 99, 118, and 136 each coordinate substrate. Residue Glu-118 participates in Mg(2+) binding.

This sequence belongs to the Nudix hydrolase family. The cofactor is Mg(2+).

The catalysed reaction is 8-oxo-dGTP + H2O = 8-oxo-dGDP + phosphate + H(+). It catalyses the reaction 8-oxo-GTP + H2O = 8-oxo-GDP + phosphate + H(+). Its function is as follows. Catalyzes the conversion of 8-oxo-dGTP to 8-oxo-dGDP, and 8-oxo-GTP to 8-oxo-GDP. In Mycobacterium tuberculosis (strain CDC 1551 / Oshkosh), this protein is 8-oxo-(d)GTP phosphatase.